The primary structure comprises 281 residues: Undecaprenyl-diphosphatase (281 aa).

Transmembrane regions (helical) follow at residues 1–21 (MNVL…FLPI), 45–65 (WTAF…IYFA), 93–113 (SKLG…GLVF), 125–145 (LIVI…SEVV), 155–175 (ISWL…VPGA), 195–215 (AARF…LLEF), 227–247 (FLVL…TIAF), and 256–276 (STNV…WMVF).

This sequence belongs to the UppP family.

The protein localises to the cell inner membrane. The enzyme catalyses di-trans,octa-cis-undecaprenyl diphosphate + H2O = di-trans,octa-cis-undecaprenyl phosphate + phosphate + H(+). Functionally, catalyzes the dephosphorylation of undecaprenyl diphosphate (UPP). Confers resistance to bacitracin. The protein is Undecaprenyl-diphosphatase of Syntrophobacter fumaroxidans (strain DSM 10017 / MPOB).